We begin with the raw amino-acid sequence, 739 residues long: Adhesion G protein-coupled receptor L4 (739 aa).

A signal peptide spans 1–19 (MRLLPLLVGFSTLLNCSYT). One can recognise an EGF-like 1 domain in the interval 20–57 (QNCSKTTCLPNAKCEVHNGVEACFCSQGYSGNGVTICE). Topologically, residues 20 to 481 (QNCSKTTCLP…DYNILTRITQ (462 aa)) are extracellular. A glycan (N-linked (GlcNAc...) asparagine) is linked at asparagine 21. 9 cysteine pairs are disulfide-bonded: cysteine 22-cysteine 33, cysteine 27-cysteine 42, cysteine 44-cysteine 56, cysteine 62-cysteine 74, cysteine 68-cysteine 83, cysteine 85-cysteine 106, cysteine 112-cysteine 124, cysteine 118-cysteine 133, and cysteine 135-cysteine 156. An EGF-like 2; calcium-binding domain is found at 58 to 107 (DIDECSESSVCGDHAVCENVNGGFSCFCREGYQTATGKSQFTPNDGSYCQ). The EGF-like 3; calcium-binding domain maps to 108–157 (DIDECSESSVCGDHAVCENVNGGFSCFCREGYQTATGKSQFTPNDGSYCQ). N-linked (GlcNAc...) asparagine glycans are attached at residues asparagine 176, asparagine 226, asparagine 237, asparagine 298, asparagine 422, asparagine 430, and asparagine 444. The GAIN-B domain occupies 293–468 (SQFDMNSTDL…AILMSSTSSI (176 aa)). Cystine bridges form between cysteine 418–cysteine 450 and cysteine 438–cysteine 452. Positions 418-468 (CAFWNYSVDAMNNGSWSTEGCELTHSNDTHTSCRCSHLTHFAILMSSTSSI) are GPS. The chain crosses the membrane as a helical span at residues 482-502 (LGIIISLICLAICIFTFWFFS). Residues 503–513 (EIQSTRTTIHK) lie on the Cytoplasmic side of the membrane. Residues 514–534 (NLCCSLFLAELVFLIGININT) form a helical membrane-spanning segment. At 535-548 (NKLVCSIIAGLLHY) the chain is on the extracellular side. A helical membrane pass occupies residues 549–569 (FFLAAFAWMCIEGIHLYLIVV). Residues 570 to 581 (GVIYNKGFLHKN) lie on the Cytoplasmic side of the membrane. Residues 582–602 (FYIFGYLSPAVVVGFSASLGY) form a helical membrane-spanning segment. The Extracellular portion of the chain corresponds to 603–622 (RYYGTTKVCWLSTENNFIWS). The helical transmembrane segment at 623–643 (FIGPACLIILVNLLAFGVIIY) threads the bilayer. The Cytoplasmic segment spans residues 644–667 (KVFRHTAGLKPEVSCYENIRSCAR). A helical membrane pass occupies residues 668–688 (GALALLFLLGTTWIFGVLHVV). Topologically, residues 689–695 (HASVVTA) are extracellular. The chain crosses the membrane as a helical span at residues 696-716 (YLFTVSNAFQGMFIFLFLCVL). Over 717–739 (SRKIQEEYYRLFKNVPCCFGCLR) the chain is Cytoplasmic.

It belongs to the G-protein coupled receptor 2 family. Adhesion G-protein coupled receptor (ADGR) subfamily. Heterodimer of 2 chains generated by proteolytic processing; the large extracellular N-terminal fragment and the membrane-bound C-terminal fragment predominantly remain associated and non-covalently linked. In terms of processing, glycosylated. Post-translationally, proteolytically cleaved into 2 subunits, an extracellular alpha subunit and a seven-transmembrane subunit.

Its subcellular location is the cell membrane. In terms of biological role, endothelial orphan receptor that acts as a key regulator of angiogenesis. The protein is Adhesion G protein-coupled receptor L4 (Adgrl4) of Mus musculus (Mouse).